Reading from the N-terminus, the 327-residue chain is Phenylalanine--tRNA ligase alpha subunit (327 aa).

Glu252 contributes to the Mg(2+) binding site.

This sequence belongs to the class-II aminoacyl-tRNA synthetase family. Phe-tRNA synthetase alpha subunit type 1 subfamily. Tetramer of two alpha and two beta subunits. It depends on Mg(2+) as a cofactor.

It localises to the cytoplasm. The catalysed reaction is tRNA(Phe) + L-phenylalanine + ATP = L-phenylalanyl-tRNA(Phe) + AMP + diphosphate + H(+). The protein is Phenylalanine--tRNA ligase alpha subunit of Photorhabdus laumondii subsp. laumondii (strain DSM 15139 / CIP 105565 / TT01) (Photorhabdus luminescens subsp. laumondii).